Consider the following 231-residue polypeptide: Potassium/proton antiporter CemA (231 aa).

3 helical membrane-spanning segments follow: residues 9-29 (FIPLLYLTSIVFLPWWVSFLF), 116-136 (IICFIILSGYSILSNEELIIL), and 191-211 (IISGLVSTFPVILDTIFKYWI).

It belongs to the CemA family.

The protein localises to the plastid. It localises to the chloroplast inner membrane. It carries out the reaction K(+)(in) + H(+)(out) = K(+)(out) + H(+)(in). Contributes to K(+)/H(+) antiport activity by supporting proton efflux to control proton extrusion and homeostasis in chloroplasts in a light-dependent manner to modulate photosynthesis. Prevents excessive induction of non-photochemical quenching (NPQ) under continuous-light conditions. Indirectly promotes efficient inorganic carbon uptake into chloroplasts. This chain is Potassium/proton antiporter CemA, found in Manihot esculenta (Cassava).